We begin with the raw amino-acid sequence, 276 residues long: MKVNFTKMQGSGNDFVVIDATKTPFQLTTSQIQKMANRRFGVGFDQLLVIEPPKNNSVDFHFRIFNADGSEVGQCGNGARCIARFIRAHQLSDREELRVSTLNEVLELKIQPDGKVSVKMGVPRFEPTEIPFIASGVANFYDIAVDNQIVKLGVVNIGNPHAIIPVERINAEEVGKLGARLSVHECFPEGANVGFMQVIDPQNIRLRVYERGTGETLACGSNACAAVAVGRRCGLLQERVVVSQPGGSLTIDWQGPLTPVTMTGPATTVFCGEWLD.

Substrate is bound by residues Asn-13, Gln-46, and Asn-66. The active-site Proton donor is Cys-75. Substrate-binding positions include 76-77 (GN), Asn-159, Asn-192, and 210-211 (ER). The Proton acceptor role is filled by Cys-219. 220–221 (GS) contacts substrate.

It belongs to the diaminopimelate epimerase family. Homodimer.

It localises to the cytoplasm. It catalyses the reaction (2S,6S)-2,6-diaminopimelate = meso-2,6-diaminopimelate. Its pathway is amino-acid biosynthesis; L-lysine biosynthesis via DAP pathway; DL-2,6-diaminopimelate from LL-2,6-diaminopimelate: step 1/1. In terms of biological role, catalyzes the stereoinversion of LL-2,6-diaminopimelate (L,L-DAP) to meso-diaminopimelate (meso-DAP), a precursor of L-lysine and an essential component of the bacterial peptidoglycan. This Coxiella burnetii (strain CbuK_Q154) (Coxiella burnetii (strain Q154)) protein is Diaminopimelate epimerase.